A 160-amino-acid polypeptide reads, in one-letter code: Cytochrome b6-f complex subunit 4 (160 aa).

The next 3 membrane-spanning stretches (helical) occupy residues 36 to 56, 95 to 115, and 131 to 151; these read LLYI…GLAV, LLGV…PFLE, and TVFL…ALPI.

The protein belongs to the cytochrome b family. PetD subfamily. In terms of assembly, the 4 large subunits of the cytochrome b6-f complex are cytochrome b6, subunit IV (17 kDa polypeptide, petD), cytochrome f and the Rieske protein, while the 4 small subunits are petG, petL, petM and petN. The complex functions as a dimer.

It localises to the plastid. The protein resides in the chloroplast thylakoid membrane. Component of the cytochrome b6-f complex, which mediates electron transfer between photosystem II (PSII) and photosystem I (PSI), cyclic electron flow around PSI, and state transitions. The polypeptide is Cytochrome b6-f complex subunit 4 (Physcomitrium patens (Spreading-leaved earth moss)).